The sequence spans 104 residues: Large ribosomal subunit protein bL21c (104 aa).

This sequence belongs to the bacterial ribosomal protein bL21 family. As to quaternary structure, part of the 50S ribosomal subunit.

Its subcellular location is the plastid. It localises to the chloroplast. Functionally, this protein binds to 23S rRNA. This is Large ribosomal subunit protein bL21c from Porphyra purpurea (Red seaweed).